We begin with the raw amino-acid sequence, 312 residues long: MSIPRELSVASGSKSISPKPSVYDYITLLKPRVMLLVVFTALVGLIVSPVSINPLYGFLAILCIAVGGGGAGALNMWYDADIDAVMERTKSRPIPAGKISSRKAFIFGMVLSILSVLIMGSFVNWFAALFLAFTIFFYIVVYTIWLKRRTPQNIVIGGAAGAFPPMIGWAAATGTVNIESFLLFLIIFMWTPPHFWSLSLFSSLDYDAAGIPMMPNVRGEHSTKKQILFYTILMAICAAGPFIIGFAGVFYGIFSTVLSIIFIHFAYRLWKSNTYDATILMAKKTFFFSLFYLAAIFGILLIEFFVWCFIIL.

8 helical membrane-spanning segments follow: residues 33–53, 54–74, 105–125, 126–146, 154–174, 181–201, 243–263, and 291–311; these read VMLL…VSIN, PLYG…AGAL, FIFG…FVNW, FAAL…TIWL, IVIG…AATG, FLLF…LSLF, IIGF…IIFI, and FYLA…CFII.

This sequence belongs to the UbiA prenyltransferase family. Protoheme IX farnesyltransferase subfamily.

Its subcellular location is the cell inner membrane. It catalyses the reaction heme b + (2E,6E)-farnesyl diphosphate + H2O = Fe(II)-heme o + diphosphate. Its pathway is porphyrin-containing compound metabolism; heme O biosynthesis; heme O from protoheme: step 1/1. Functionally, converts heme B (protoheme IX) to heme O by substitution of the vinyl group on carbon 2 of heme B porphyrin ring with a hydroxyethyl farnesyl side group. The protein is Protoheme IX farnesyltransferase of Bartonella henselae (strain ATCC 49882 / DSM 28221 / CCUG 30454 / Houston 1) (Rochalimaea henselae).